Here is a 294-residue protein sequence, read N- to C-terminus: Survival motor neuron protein (294 aa).

A compositionally biased stretch (gly residues) spans Met1 to Val12. Positions Met1 to Asp32 are disordered. Ala2 carries the post-translational modification N-acetylalanine. Phosphoserine; by PKA occurs at positions 4, 5, and 8. Residues Pro13 to Asp44 form a P1 (binding site for GEMIN2) region. Thr25 is subject to Phosphothreonine. Phosphoserine is present on residues Ser28 and Ser31. Lys51 is covalently cross-linked (Glycyl lysine isopeptide (Lys-Gly) (interchain with G-Cter in SUMO2)). The disordered stretch occupies residues Asp58 to Pro88. Positions Thr68 to Lys82 are enriched in basic residues. Residue Thr69 is modified to Phosphothreonine. Position 85 is a phosphothreonine; by PKA (Thr85). The region spanning Gln91 to Asn151 is the Tudor domain. Residues Lys97–Lys209 are required for interaction with RPP20/POP7. A compositionally biased stretch (low complexity) spans Ala156–Ser166. Positions Ala156–Pro222 are disordered. A Phosphoserine; by PKA modification is found at Ser187. Over residues Leu194–Arg204 the composition is skewed to pro residues. A Glycyl lysine isopeptide (Lys-Gly) (interchain with G-Cter in SUMO2) cross-link involves residue Lys209. Residues Pro240–Trp267 are P2 (binding site for SM B). Residues Gly279–Asn294 form a required for interaction with SYNCRIP region.

This sequence belongs to the SMN family. As to quaternary structure, homooligomer; may form higher order homooligomers in the dimer to octamer range. Part of the core SMN complex that contains SMN1, GEMIN2/SIP1, DDX20/GEMIN3, GEMIN4, GEMIN5, GEMIN6, GEMIN7, GEMIN8 and STRAP/UNRIP. Part of the SMN-Sm complex that contains SMN1, GEMIN2/SIP1, DDX20/GEMIN3, GEMIN4, GEMIN5, GEMIN6, GEMIN7, GEMIN8, STRAP/UNRIP and the Sm proteins SNRPB, SNRPD1, SNRPD2, SNRPD3, SNRPE, SNRPF and SNRPG. Component of an import snRNP complex composed of KPNB1, RNUT1, SMN1 and ZNF259. Interacts with DDX20, FBL, NOLA1, RNUT1, SYNCRIP and with several spliceosomal snRNP core Sm proteins, including SNRPB, SNRPD1, SNRPD2, SNRPD3, SNRPE and ILF3. Interacts with GEMIN2; the interaction is direct. Interacts with GEMIN3; the interaction is direct. Interacts with GEMIN8; the interaction is direct. Interacts with SNRPB; the interaction is direct. Interacts (via Tudor domain) with SNRPD1 (via C-terminus); the interaction is direct. Interacts with SNRPD2; the interaction is direct. Interacts (via Tudor domain) with SNRPD3 (via C-terminus); the interaction is direct. Interacts with SNRPE; the interaction is direct. Interacts with OSTF1, LSM10, LSM11 and RPP20/POP7. Interacts (via C-terminal region) with ZPR1 (via C-terminal region). Interacts (via Tudor domain) with COIL. Interacts with SETX; recruits SETX to POLR2A. Interacts with POLR2A (via the C-terminal domain (CTD)). Interacts with PRMT5. Interacts with XRN2. Interacts (via C-terminus) with FMR1 (via C-terminus); the interaction is direct and occurs in a RNA-independent manner. Interacts (via Tudor domain) with SF3B2 ('Arg-508'-methylated form). Interacts with WRAP53/TCAB1. Interacts (via Tudor domain) with ELAVL4 in an RNA-independent manner; the interaction is required for localization of ELAVL4 to RNA granules. Interacts with FRG1.

Its subcellular location is the nucleus. The protein localises to the gem. The protein resides in the cajal body. It is found in the cytoplasm. It localises to the cytoplasmic granule. Its subcellular location is the perikaryon. The protein localises to the cell projection. The protein resides in the neuron projection. It is found in the axon. It localises to the myofibril. Its subcellular location is the sarcomere. The protein localises to the z line. The SMN complex catalyzes the assembly of small nuclear ribonucleoproteins (snRNPs), the building blocks of the spliceosome, and thereby plays an important role in the splicing of cellular pre-mRNAs. Most spliceosomal snRNPs contain a common set of Sm proteins SNRPB, SNRPD1, SNRPD2, SNRPD3, SNRPE, SNRPF and SNRPG that assemble in a heptameric protein ring on the Sm site of the small nuclear RNA to form the core snRNP (Sm core). In the cytosol, the Sm proteins SNRPD1, SNRPD2, SNRPE, SNRPF and SNRPG are trapped in an inactive 6S pICln-Sm complex by the chaperone CLNS1A that controls the assembly of the core snRNP. To assemble core snRNPs, the SMN complex accepts the trapped 5Sm proteins from CLNS1A forming an intermediate. Binding of snRNA inside 5Sm ultimately triggers eviction of the SMN complex, thereby allowing binding of SNRPD3 and SNRPB to complete assembly of the core snRNP. Within the SMN complex, SMN1 acts as a structural backbone and together with GEMIN2 it gathers the Sm complex subunits. Ensures the correct splicing of U12 intron-containing genes that may be important for normal motor and proprioceptive neurons development. Also required for resolving RNA-DNA hybrids created by RNA polymerase II, that form R-loop in transcription terminal regions, an important step in proper transcription termination. May also play a role in the metabolism of small nucleolar ribonucleoprotein (snoRNPs). In Macaca fascicularis (Crab-eating macaque), this protein is Survival motor neuron protein (SMN1).